The following is a 297-amino-acid chain: N-acetylneuraminate lyase (297 aa).

S47 and T48 together coordinate aceneuramate. Catalysis depends on Y137, which acts as the Proton donor. Residue K165 is the Schiff-base intermediate with substrate of the active site. Aceneuramate is bound by residues T167, G189, D191, E192, and S208.

It belongs to the DapA family. NanA subfamily. Homotetramer.

It is found in the cytoplasm. It catalyses the reaction aceneuramate = aldehydo-N-acetyl-D-mannosamine + pyruvate. It functions in the pathway amino-sugar metabolism; N-acetylneuraminate degradation; D-fructose 6-phosphate from N-acetylneuraminate: step 1/5. Functionally, catalyzes the reversible aldol cleavage of N-acetylneuraminic acid (sialic acid; Neu5Ac) to form pyruvate and N-acetylmannosamine (ManNAc) via a Schiff base intermediate. The sequence is that of N-acetylneuraminate lyase from Citrobacter koseri (strain ATCC BAA-895 / CDC 4225-83 / SGSC4696).